The chain runs to 349 residues: GTP 3',8-cyclase (349 aa).

Residues 24–249 (PFGRAITYLR…VDSDYQTGGP (226 aa)) form the Radical SAM core domain. GTP is bound at residue Arg-33. Residues Cys-40 and Cys-44 each coordinate [4Fe-4S] cluster. Tyr-46 is a binding site for S-adenosyl-L-methionine. Position 47 (Cys-47) interacts with [4Fe-4S] cluster. Arg-82 is a GTP binding site. Gly-86 is an S-adenosyl-L-methionine binding site. Position 116 (Thr-116) interacts with GTP. Ser-140 provides a ligand contact to S-adenosyl-L-methionine. GTP is bound at residue Lys-176. Met-210 serves as a coordination point for S-adenosyl-L-methionine. 2 residues coordinate [4Fe-4S] cluster: Cys-273 and Cys-276. Position 278–280 (278–280 (RVR)) interacts with GTP. Residue Cys-290 participates in [4Fe-4S] cluster binding.

It belongs to the radical SAM superfamily. MoaA family. As to quaternary structure, monomer and homodimer. [4Fe-4S] cluster is required as a cofactor.

The catalysed reaction is GTP + AH2 + S-adenosyl-L-methionine = (8S)-3',8-cyclo-7,8-dihydroguanosine 5'-triphosphate + 5'-deoxyadenosine + L-methionine + A + H(+). It participates in cofactor biosynthesis; molybdopterin biosynthesis. Functionally, catalyzes the cyclization of GTP to (8S)-3',8-cyclo-7,8-dihydroguanosine 5'-triphosphate. This Agrobacterium fabrum (strain C58 / ATCC 33970) (Agrobacterium tumefaciens (strain C58)) protein is GTP 3',8-cyclase.